We begin with the raw amino-acid sequence, 301 residues long: Acetyl-coenzyme A carboxylase carboxyl transferase subunit beta (301 aa).

Residues 25–294 form the CoA carboxyltransferase N-terminal domain; the sequence is LWIKCPETGE…SAANDVTRGA (270 aa).

It belongs to the AccD/PCCB family. Acetyl-CoA carboxylase is a heterohexamer composed of biotin carboxyl carrier protein (AccB), biotin carboxylase (AccC) and two subunits each of ACCase subunit alpha (AccA) and ACCase subunit beta (AccD).

Its subcellular location is the cytoplasm. The catalysed reaction is N(6)-carboxybiotinyl-L-lysyl-[protein] + acetyl-CoA = N(6)-biotinyl-L-lysyl-[protein] + malonyl-CoA. Its pathway is lipid metabolism; malonyl-CoA biosynthesis; malonyl-CoA from acetyl-CoA: step 1/1. Component of the acetyl coenzyme A carboxylase (ACC) complex. Biotin carboxylase (BC) catalyzes the carboxylation of biotin on its carrier protein (BCCP) and then the CO(2) group is transferred by the transcarboxylase to acetyl-CoA to form malonyl-CoA. This chain is Acetyl-coenzyme A carboxylase carboxyl transferase subunit beta, found in Rhizobium etli (strain ATCC 51251 / DSM 11541 / JCM 21823 / NBRC 15573 / CFN 42).